A 433-amino-acid chain; its full sequence is 2,2-dialkylglycine decarboxylase (433 aa).

Lys272 carries the N6-(pyridoxal phosphate)lysine modification.

The protein belongs to the class-III pyridoxal-phosphate-dependent aminotransferase family. In terms of assembly, homotetramer. It depends on pyridoxal 5'-phosphate as a cofactor.

It catalyses the reaction 2,2-dialkylglycine + pyruvate + H(+) = dialkyl ketone + L-alanine + CO2. In terms of biological role, the dialkylglycine decarboxylase is of interest because it normally catalyzes both decarboxylation and amino transfer. It may be more properly described as a decarboxylating aminotransferase rather than an aminotransferring decarboxylase. In Burkholderia cepacia (Pseudomonas cepacia), this protein is 2,2-dialkylglycine decarboxylase (dgdA).